Consider the following 478-residue polypeptide: Major facilitator superfamily domain-containing protein 12 (478 aa).

Met1 carries the post-translational modification N-acetylmethionine. At 1 to 26 (MVPGSPAAGAGPAPRALSLAARLSYA) the chain is on the cytoplasmic side. The helical transmembrane segment at 27-47 (VGHFLNDLCASMWFTYLLLYL) threads the bilayer. The Lumenal segment spans residues 48 to 56 (HSVRAYSSR). A helical transmembrane segment spans residues 57 to 77 (GAGLLLLLGQVADGLCTPLVG). Residues 78 to 97 (YEADRAAGRCARCGPRKAWH) lie on the Cytoplasmic side of the membrane. Residues 98 to 118 (LVGTVCVLLSFPFIFSPCLGC) traverse the membrane as a helical segment. At 119–124 (GAATPE) the chain is on the lumenal side. A helical membrane pass occupies residues 125 to 145 (WAALLYYGPFIVVFQFGWAAT). The Cytoplasmic segment spans residues 146 to 168 (QIAHLSLIPELVTSDHEKVELTA). Residues 169 to 189 (LRYAFTVVANITVFGAAWLLL) traverse the membrane as a helical segment. The Lumenal segment spans residues 190–216 (RLQGSAREGPPDEAGDHLGVQDVPVFR). The chain crosses the membrane as a helical span at residues 217–237 (TLSLCVVGVGAVFSLLFHLGT). Residues 238–277 (RERRRPPAQEPDERSPLLAPATARPLLLWKHWLREPSFYQ) lie on the Cytoplasmic side of the membrane. The chain crosses the membrane as a helical span at residues 278–300 (VGLLYMSTRLIVNLSQTYIAMYL). Topologically, residues 301–308 (TYSLNLPK) are lumenal. The helical transmembrane segment at 309-329 (KFIATIPLVMYVSGFCSSFLM) threads the bilayer. Over 330 to 338 (KPVNKCIGR) the chain is Cytoplasmic. The helical transmembrane segment at 339–359 (NMTYFVGLLVILAFAAWVVLV) threads the bilayer. Over 360–361 (DE) the chain is Lumenal. A helical membrane pass occupies residues 362–382 (LGMAVYVAAVLLGGGCATILV). Residues 383–400 (TSLAMTADLIGPHTHSGA) are Cytoplasmic-facing. The chain crosses the membrane as a helical span at residues 401 to 421 (FVYGAMSFSDKVANGLAVMVI). Residues 422-436 (QSLHPCSLELCCRAC) are Lumenal-facing. The chain crosses the membrane as a helical span at residues 437–457 (VGFYHWVMVAVTGGVGVAATL). Over 458-478 (SLCSLLVWPIRLRSWDPGAQP) the chain is Cytoplasmic.

This sequence belongs to the major facilitator superfamily.

Its subcellular location is the melanosome membrane. It is found in the lysosome membrane. It carries out the reaction L-cysteine(in) = L-cysteine(out). Transporter that mediates the import of cysteine into melanosomes, thereby regulating skin/hair pigmentation. In melanosomes, cysteine import is required both for normal levels of cystine, the oxidized dimer of cysteine, and provide cysteine for the production of the cysteinyldopas used in pheomelanin synthesis, thereby regulating skin/hair pigmentation. Also catalyzes import of cysteine into lysosomes in non-pigmented cells, regulating lysosomal cystine and cysteine storage, which is essnetial for redox homeostasis. The polypeptide is Major facilitator superfamily domain-containing protein 12 (Equus caballus (Horse)).